The sequence spans 90 residues: MSRHVTVVLLLAIVLLLSSHMIHGQHWSYGLRPGGKREVESLQESYAEVPNEVSFTELQHLECSIPQNRISLVRDALMNWLEGENARKKI.

The N-terminal stretch at 1–24 (MSRHVTVVLLLAIVLLLSSHMIHG) is a signal peptide. Pyrrolidone carboxylic acid is present on Q25. G34 carries the glycine amide modification.

Belongs to the GnRH family. Forebrain.

Its subcellular location is the secreted. Functionally, stimulates the secretion of gonadotropins. This is Progonadoliberin-1 (gnrh1) from Aquarana catesbeiana (American bullfrog).